Here is a 479-residue protein sequence, read N- to C-terminus: Proline--tRNA ligase 2 (479 aa).

This sequence belongs to the class-II aminoacyl-tRNA synthetase family. ProS type 3 subfamily. In terms of assembly, homodimer.

The protein resides in the cytoplasm. It carries out the reaction tRNA(Pro) + L-proline + ATP = L-prolyl-tRNA(Pro) + AMP + diphosphate. Catalyzes the attachment of proline to tRNA(Pro) in a two-step reaction: proline is first activated by ATP to form Pro-AMP and then transferred to the acceptor end of tRNA(Pro). The chain is Proline--tRNA ligase 2 from Rhodococcus jostii (strain RHA1).